A 482-amino-acid chain; its full sequence is Sugar transporter ERD6-like 16 (482 aa).

Transmembrane regions (helical) follow at residues 42–62 (LMVLFSTFVAVCGSFEFGSCV), 80–100 (LAEFSMFGSILTIGAMLGAVM), 117–137 (SACFCITGWLAVFFTKGALLL), 142–162 (FFTGYGIGVFSYVVPVYIAEI), 173–193 (TLNQLMIVIGSSVSFLIGSLI), 197–217 (TLALTGLAPCIVLLFGLCFIP), 280–300 (VIIGVSLMVFQQFVGINGIGF), 316–336 (LGTIAIACVQVPITVLGTILI), 344–364 (LIMISAGGIFLGCILTGTSFL), 382–402 (GVLIYVAAFSIGMGPVPWVIM), 413–433 (IAGSLVVLVNWSGAWAVSYTF), and 443–463 (GTFYLYSAFAAATIIFVAKMV).

This sequence belongs to the major facilitator superfamily. Sugar transporter (TC 2.A.1.1) family.

Its subcellular location is the membrane. Its function is as follows. Sugar transporter. The chain is Sugar transporter ERD6-like 16 from Arabidopsis thaliana (Mouse-ear cress).